The sequence spans 884 residues: Translation initiation factor IF-2 (884 aa).

2 stretches are compositionally biased toward basic and acidic residues: residues 110–153 (AKAK…KEKA) and 193–234 (KQKE…DHHV). The segment at 110 to 291 (AKAKAEADAK…NRSTAPQSMA (182 aa)) is disordered. Residues 255-268 (GRRARNKPTNKKRG) show a composition bias toward basic residues. Positions 384-553 (TRAPVVTIMG…LLQSEVLELK (170 aa)) constitute a tr-type G domain. The segment at 393–400 (GHVDHGKT) is G1. 393–400 (GHVDHGKT) is a GTP binding site. Residues 418–422 (GITQH) are G2. A G3 region spans residues 439 to 442 (DTPG). Residues 439-443 (DTPGH) and 493-496 (NKMD) contribute to the GTP site. The G4 stretch occupies residues 493–496 (NKMD). The interval 529-531 (SAK) is G5.

Belongs to the TRAFAC class translation factor GTPase superfamily. Classic translation factor GTPase family. IF-2 subfamily.

It is found in the cytoplasm. One of the essential components for the initiation of protein synthesis. Protects formylmethionyl-tRNA from spontaneous hydrolysis and promotes its binding to the 30S ribosomal subunits. Also involved in the hydrolysis of GTP during the formation of the 70S ribosomal complex. The protein is Translation initiation factor IF-2 of Shewanella denitrificans (strain OS217 / ATCC BAA-1090 / DSM 15013).